Here is a 92-residue protein sequence, read N- to C-terminus: RNA-binding protein Hfq (92 aa).

The region spanning 9–68 (DPFLNALRRERVPVSIYLVNGIKLQGQVESFDQFVILLKNTVSQMVYKHAISTVVPARPF) is the Sm domain. The interval 68–92 (FNVSSHHNTPNQAAGYNASHDDSAE) is disordered. Residues 69 to 81 (NVSSHHNTPNQAA) are compositionally biased toward polar residues.

It belongs to the Hfq family. As to quaternary structure, homohexamer.

In terms of biological role, RNA chaperone that binds small regulatory RNA (sRNAs) and mRNAs to facilitate mRNA translational regulation in response to envelope stress, environmental stress and changes in metabolite concentrations. Also binds with high specificity to tRNAs. The sequence is that of RNA-binding protein Hfq from Shewanella loihica (strain ATCC BAA-1088 / PV-4).